A 387-amino-acid polypeptide reads, in one-letter code: Acetylserotonin O-methyltransferase (387 aa).

Residues Y153, W170, E216, 246-248 (GDF), and R263 each bind S-adenosyl-L-methionine. Catalysis depends on H266, which acts as the Proton donor/acceptor. The substrate site is built by D267 and Q317. Residues 355-387 (ARGGGAGARSDGGGGEATSQTGSGTGREVGAQD) are disordered. A compositionally biased stretch (gly residues) spans 356 to 370 (RGGGAGARSDGGGGE).

It belongs to the class I-like SAM-binding methyltransferase superfamily. Cation-independent O-methyltransferase family. In terms of assembly, homodimer.

The enzyme catalyses N-acetylserotonin + S-adenosyl-L-methionine = melatonin + S-adenosyl-L-homocysteine + H(+). It participates in aromatic compound metabolism; melatonin biosynthesis; melatonin from serotonin: step 1/2. In terms of biological role, catalyzes the transfer of a methyl group onto N-acetylserotonin, producing melatonin (N-acetyl-5-methoxytryptamine). The polypeptide is Acetylserotonin O-methyltransferase (Asmt) (Mus musculus molossinus (Japanese house mouse)).